Reading from the N-terminus, the 360-residue chain is Chorismate synthase (360 aa).

NADP(+) is bound at residue Arg-46. Residues 122-124, Gly-282, 297-301, and Arg-324 each bind FMN; these read RAS and KPTPS.

It belongs to the chorismate synthase family. It depends on FMNH2 as a cofactor.

It carries out the reaction 5-O-(1-carboxyvinyl)-3-phosphoshikimate = chorismate + phosphate. Its pathway is metabolic intermediate biosynthesis; chorismate biosynthesis; chorismate from D-erythrose 4-phosphate and phosphoenolpyruvate: step 7/7. In terms of biological role, catalyzes the anti-1,4-elimination of the C-3 phosphate and the C-6 proR hydrogen from 5-enolpyruvylshikimate-3-phosphate (EPSP) to yield chorismate, which is the branch point compound that serves as the starting substrate for the three terminal pathways of aromatic amino acid biosynthesis. This reaction introduces a second double bond into the aromatic ring system. This Archaeoglobus fulgidus (strain ATCC 49558 / DSM 4304 / JCM 9628 / NBRC 100126 / VC-16) protein is Chorismate synthase.